Reading from the N-terminus, the 61-residue chain is Small ribosomal subunit protein uS14 (61 aa).

Zn(2+) is bound by residues C24, C27, C40, and C43.

The protein belongs to the universal ribosomal protein uS14 family. Zinc-binding uS14 subfamily. As to quaternary structure, part of the 30S ribosomal subunit. Contacts proteins S3 and S10. Zn(2+) is required as a cofactor.

Functionally, binds 16S rRNA, required for the assembly of 30S particles and may also be responsible for determining the conformation of the 16S rRNA at the A site. This chain is Small ribosomal subunit protein uS14, found in Anoxybacillus flavithermus (strain DSM 21510 / WK1).